We begin with the raw amino-acid sequence, 432 residues long: MGARVQVQHYNLGSSDSYIATSLHDLNSVDGPPRDIDGIGGAVGRDGDSLDNDGDSSSADCMHESYRNSMQIGVEEGGSNMENKGSAYIMLNIEDVSPIEAARGRFLQIILDYFISQHVIEVCESKRDHDVDSGGRDSNSKVKRKSDDTRYEGDPSFALPLMYIANLYETLVGEANVRLASLNGIRDKTIGVALEAAGGLYRKLTKKFPKKGTCMYRRRELATSVETRTRFPELVIHEEKRVRFVVVNGLDIVEKPSDLPIEEAEWFKRLTGRNEVAISARDYKFYCPRRKHRRLQNSVSSINGLPTFPGIDSSTLANTQGFREDQSQQQHTPSPSKHHMSSLSHQFHQSIHQSHQHHQSIYQSQHAATHYPSQNHQCDPELSHTQMACLQPLTGGHVMPNSPAKFCDQCGAQYLRETSKFCSECGSKRLGI.

3 disordered regions span residues 37–61, 127–151, and 298–378; these read DGIG…SADC, RDHD…DTRY, and SVSS…NHQC. Residues 312–335 show a composition bias toward polar residues; it reads DSSTLANTQGFREDQSQQQHTPSP. Residues 341-366 show a composition bias toward low complexity; sequence SSLSHQFHQSIHQSHQHHQSIYQSQH.

This is an uncharacterized protein from Arabidopsis thaliana (Mouse-ear cress).